The primary structure comprises 484 residues: Glutamate--tRNA ligase (484 aa).

The 'HIGH' region motif lies at 11–21 (PSPTGYPHLGN). Zn(2+) contacts are provided by cysteine 108, cysteine 110, cysteine 135, and aspartate 137. A 'KMSKS' region motif is present at residues 245–249 (KLSKR). Residue lysine 248 participates in ATP binding.

This sequence belongs to the class-I aminoacyl-tRNA synthetase family. Glutamate--tRNA ligase type 1 subfamily. Monomer. Zn(2+) is required as a cofactor.

Its subcellular location is the cytoplasm. It catalyses the reaction tRNA(Glu) + L-glutamate + ATP = L-glutamyl-tRNA(Glu) + AMP + diphosphate. In terms of biological role, catalyzes the attachment of glutamate to tRNA(Glu) in a two-step reaction: glutamate is first activated by ATP to form Glu-AMP and then transferred to the acceptor end of tRNA(Glu). This chain is Glutamate--tRNA ligase, found in Dehalococcoides mccartyi (strain ATCC BAA-2266 / KCTC 15142 / 195) (Dehalococcoides ethenogenes (strain 195)).